Reading from the N-terminus, the 196-residue chain is Molybdenum cofactor guanylyltransferase (196 aa).

GTP is bound by residues 10-12 (LAG), K23, N51, D69, and D99. D99 is a Mg(2+) binding site.

Belongs to the MobA family. As to quaternary structure, monomer. It depends on Mg(2+) as a cofactor.

It localises to the cytoplasm. It carries out the reaction Mo-molybdopterin + GTP + H(+) = Mo-molybdopterin guanine dinucleotide + diphosphate. Functionally, transfers a GMP moiety from GTP to Mo-molybdopterin (Mo-MPT) cofactor (Moco or molybdenum cofactor) to form Mo-molybdopterin guanine dinucleotide (Mo-MGD) cofactor. This is Molybdenum cofactor guanylyltransferase from Shewanella frigidimarina (strain NCIMB 400).